A 274-amino-acid polypeptide reads, in one-letter code: tRNA pseudouridine synthase A (274 aa).

Asp-51 serves as the catalytic Nucleophile. Tyr-109 serves as a coordination point for substrate.

Belongs to the tRNA pseudouridine synthase TruA family. As to quaternary structure, homodimer.

It carries out the reaction uridine(38/39/40) in tRNA = pseudouridine(38/39/40) in tRNA. In terms of biological role, formation of pseudouridine at positions 38, 39 and 40 in the anticodon stem and loop of transfer RNAs. This Acidovorax ebreus (strain TPSY) (Diaphorobacter sp. (strain TPSY)) protein is tRNA pseudouridine synthase A.